The following is a 142-amino-acid chain: Small ribosomal subunit protein uS11 (142 aa).

Residues 1–21 (MPPKTRGAVRKPRRKDKKNIA) form a disordered region. Over residues 7–17 (GAVRKPRRKDK) the composition is skewed to basic residues.

The protein belongs to the universal ribosomal protein uS11 family. Part of the 30S ribosomal subunit. Interacts with proteins S7 and S18. Binds to IF-3.

Its function is as follows. Located on the platform of the 30S subunit, it bridges several disparate RNA helices of the 16S rRNA. Forms part of the Shine-Dalgarno cleft in the 70S ribosome. This is Small ribosomal subunit protein uS11 from Paenarthrobacter aurescens (strain TC1).